Consider the following 126-residue polypeptide: Large ribosomal subunit protein bL12 (126 aa).

Belongs to the bacterial ribosomal protein bL12 family. Homodimer. Part of the ribosomal stalk of the 50S ribosomal subunit. Forms a multimeric L10(L12)X complex, where L10 forms an elongated spine to which 2 to 4 L12 dimers bind in a sequential fashion. Binds GTP-bound translation factors.

Functionally, forms part of the ribosomal stalk which helps the ribosome interact with GTP-bound translation factors. Is thus essential for accurate translation. This Methylorubrum populi (strain ATCC BAA-705 / NCIMB 13946 / BJ001) (Methylobacterium populi) protein is Large ribosomal subunit protein bL12.